We begin with the raw amino-acid sequence, 490 residues long: GTPase Der (490 aa).

2 consecutive EngA-type G domains span residues phenylalanine 3–glutamate 167 and leucine 203–asparagine 378. GTP is bound by residues glycine 9–serine 16, aspartate 56–leucine 60, asparagine 119–glutamate 122, glycine 209–serine 216, aspartate 256–methionine 260, and asparagine 321–aspartate 324. The 87-residue stretch at arginine 379–alanine 465 folds into the KH-like domain. A disordered region spans residues proline 451–glycine 490. The span at lysine 469–glycine 484 shows a compositional bias: basic residues.

Belongs to the TRAFAC class TrmE-Era-EngA-EngB-Septin-like GTPase superfamily. EngA (Der) GTPase family. As to quaternary structure, associates with the 50S ribosomal subunit.

In terms of biological role, GTPase that plays an essential role in the late steps of ribosome biogenesis. This Dinoroseobacter shibae (strain DSM 16493 / NCIMB 14021 / DFL 12) protein is GTPase Der.